A 152-amino-acid chain; its full sequence is Deoxyuridine 5'-triphosphate nucleotidohydrolase (152 aa).

Residues 71-73, N84, 88-90, and M98 contribute to the substrate site; these read RSG and LID.

It belongs to the dUTPase family. The cofactor is Mg(2+).

It catalyses the reaction dUTP + H2O = dUMP + diphosphate + H(+). It functions in the pathway pyrimidine metabolism; dUMP biosynthesis; dUMP from dCTP (dUTP route): step 2/2. Its function is as follows. This enzyme is involved in nucleotide metabolism: it produces dUMP, the immediate precursor of thymidine nucleotides and it decreases the intracellular concentration of dUTP so that uracil cannot be incorporated into DNA. This Klebsiella pneumoniae (strain 342) protein is Deoxyuridine 5'-triphosphate nucleotidohydrolase.